Here is a 968-residue protein sequence, read N- to C-terminus: RNA polymerase-associated protein RapA (968 aa).

In terms of domain architecture, Helicase ATP-binding spans 164-334 (DVGRRHAPRV…FARLRLLDPN (171 aa)). Residue 177-184 (DEVGLGKT) participates in ATP binding. The DEAH box motif lies at 280–283 (DEAH). Residues 490–644 (RVEWLMGYLT…TCPTGRTVYD (155 aa)) form the Helicase C-terminal domain.

The protein belongs to the SNF2/RAD54 helicase family. RapA subfamily. As to quaternary structure, interacts with the RNAP. Has a higher affinity for the core RNAP than for the holoenzyme. Its ATPase activity is stimulated by binding to RNAP.

Its function is as follows. Transcription regulator that activates transcription by stimulating RNA polymerase (RNAP) recycling in case of stress conditions such as supercoiled DNA or high salt concentrations. Probably acts by releasing the RNAP, when it is trapped or immobilized on tightly supercoiled DNA. Does not activate transcription on linear DNA. Probably not involved in DNA repair. The polypeptide is RNA polymerase-associated protein RapA (Klebsiella pneumoniae (strain 342)).